We begin with the raw amino-acid sequence, 328 residues long: tRNA uridine(34) hydroxylase (328 aa).

One can recognise a Rhodanese domain in the interval 130 to 224 (LDEDTVVLDT…YGKDPEVQGE (95 aa)). C184 acts as the Cysteine persulfide intermediate in catalysis.

The protein belongs to the TrhO family.

It carries out the reaction uridine(34) in tRNA + AH2 + O2 = 5-hydroxyuridine(34) in tRNA + A + H2O. Functionally, catalyzes oxygen-dependent 5-hydroxyuridine (ho5U) modification at position 34 in tRNAs. This is tRNA uridine(34) hydroxylase from Streptococcus pyogenes serotype M49 (strain NZ131).